The sequence spans 335 residues: Tetraacyldisaccharide 4'-kinase (335 aa).

ATP is bound at residue 59 to 66 (TAGGNGKT).

The protein belongs to the LpxK family.

The catalysed reaction is a lipid A disaccharide + ATP = a lipid IVA + ADP + H(+). It functions in the pathway glycolipid biosynthesis; lipid IV(A) biosynthesis; lipid IV(A) from (3R)-3-hydroxytetradecanoyl-[acyl-carrier-protein] and UDP-N-acetyl-alpha-D-glucosamine: step 6/6. Functionally, transfers the gamma-phosphate of ATP to the 4'-position of a tetraacyldisaccharide 1-phosphate intermediate (termed DS-1-P) to form tetraacyldisaccharide 1,4'-bis-phosphate (lipid IVA). The chain is Tetraacyldisaccharide 4'-kinase from Vibrio campbellii (strain ATCC BAA-1116).